A 552-amino-acid chain; its full sequence is Ferry endosomal RAB5 effector complex subunit 3 (552 aa).

A disordered region spans residues 383–403 (LKESLDSGNQNGGNDDKTKNA).

Component of the FERRY complex composed of five subunits, TBCK, PPP1R21, FERRY3, CRYZL1 and GATD1 with a ratio of 1:2:1:2:4, respectively.

It is found in the cytoplasm. Its subcellular location is the early endosome. Component of the FERRY complex (Five-subunit Endosomal Rab5 and RNA/ribosome intermediary). The FERRY complex directly interacts with mRNAs and RAB5A, and functions as a RAB5A effector involved in the localization and the distribution of specific mRNAs most likely by mediating their endosomal transport. The complex recruits mRNAs and ribosomes to early endosomes through direct mRNA-interaction. Plays a role in mast cell degranulation. This is Ferry endosomal RAB5 effector complex subunit 3 from Homo sapiens (Human).